The following is a 260-amino-acid chain: 3-alpha-(or 20-beta)-hydroxysteroid dehydrogenase (260 aa).

Arg17, Met19, Asp38, Asp61, Val62, Asn88, Tyr153, Lys157, Val186, Thr188, and Thr191 together coordinate NAD(+). Catalysis depends on Tyr153, which acts as the Proton acceptor.

It belongs to the short-chain dehydrogenases/reductases (SDR) family. In terms of assembly, homotetramer.

It carries out the reaction androstan-3alpha,17beta-diol + NAD(+) = 17beta-hydroxyandrostanone + NADH + H(+). It functions in the pathway lipid metabolism; steroid degradation. Functionally, probably involved in steroid metabolism. This Mycobacterium tuberculosis (strain CDC 1551 / Oshkosh) protein is 3-alpha-(or 20-beta)-hydroxysteroid dehydrogenase (fabG3).